Reading from the N-terminus, the 368-residue chain is tRNA-specific 2-thiouridylase MnmA (368 aa).

ATP-binding positions include 24 to 31 (AMSGGVDS) and L50. Catalysis depends on C117, which acts as the Nucleophile. A disulfide bridge links C117 with C213. An ATP-binding site is contributed by G141. Positions 163 to 165 (KDQ) are interaction with tRNA. C213 serves as the catalytic Cysteine persulfide intermediate.

The protein belongs to the MnmA/TRMU family.

It is found in the cytoplasm. It catalyses the reaction S-sulfanyl-L-cysteinyl-[protein] + uridine(34) in tRNA + AH2 + ATP = 2-thiouridine(34) in tRNA + L-cysteinyl-[protein] + A + AMP + diphosphate + H(+). Catalyzes the 2-thiolation of uridine at the wobble position (U34) of tRNA, leading to the formation of s(2)U34. The protein is tRNA-specific 2-thiouridylase MnmA of Wolbachia pipientis subsp. Culex pipiens (strain wPip).